A 257-amino-acid chain; its full sequence is Hydroxyethylthiazole kinase 1 (257 aa).

Methionine 41 contacts substrate. Residues lysine 117 and threonine 162 each contribute to the ATP site. Residue glycine 189 coordinates substrate.

Belongs to the Thz kinase family. Requires Mg(2+) as cofactor.

The catalysed reaction is 5-(2-hydroxyethyl)-4-methylthiazole + ATP = 4-methyl-5-(2-phosphooxyethyl)-thiazole + ADP + H(+). Its pathway is cofactor biosynthesis; thiamine diphosphate biosynthesis; 4-methyl-5-(2-phosphoethyl)-thiazole from 5-(2-hydroxyethyl)-4-methylthiazole: step 1/1. Catalyzes the phosphorylation of the hydroxyl group of 4-methyl-5-beta-hydroxyethylthiazole (THZ). The protein is Hydroxyethylthiazole kinase 1 of Oceanobacillus iheyensis (strain DSM 14371 / CIP 107618 / JCM 11309 / KCTC 3954 / HTE831).